The primary structure comprises 123 residues: uncharacterized protein (123 aa).

Residues 1 to 24 are disordered; it reads MGGGGPPARVQGTEGSQTGGGAVA.

This is an uncharacterized protein from Halorubrum pleomorphic virus 1 (HRPV-1).